The chain runs to 452 residues: Adenylosuccinate synthetase isozyme 1 (452 aa).

The interval 1 to 22 is disordered; sequence MSGTRASNDRSSHPGGHKRPRY. GTP contacts are provided by residues 37–43 and 65–67; these read GDEGKGK and GHT. The active-site Proton acceptor is the Asp-38. Mg(2+) contacts are provided by Asp-38 and Gly-65. Asp-38 contributes to the substrate binding site. Residues 38–41, 63–66, Thr-158, Arg-172, Asn-251, Thr-266, and Arg-330 each bind IMP; these read DEGK and NAGH. His-66 serves as the catalytic Proton donor. Residue 326–332 participates in substrate binding; sequence VTTGRKR. GTP is bound by residues Arg-332, 358-360, and 440-443; these read KLD and GVGK.

The protein belongs to the adenylosuccinate synthetase family. Homodimer. Mg(2+) serves as cofactor.

It is found in the cytoplasm. It catalyses the reaction IMP + L-aspartate + GTP = N(6)-(1,2-dicarboxyethyl)-AMP + GDP + phosphate + 2 H(+). It functions in the pathway purine metabolism; AMP biosynthesis via de novo pathway; AMP from IMP: step 1/2. Component of the purine nucleotide cycle (PNC), which interconverts IMP and AMP to regulate the nucleotide levels in various tissues, and which contributes to glycolysis and ammoniagenesis. Catalyzes the first committed step in the biosynthesis of AMP from IMP. This chain is Adenylosuccinate synthetase isozyme 1 (adss1), found in Xenopus tropicalis (Western clawed frog).